The chain runs to 420 residues: Putative movement protein (420 aa).

2 stretches are compositionally biased toward low complexity: residues 1–18 (MPLT…TSFS) and 30–59 (TSCS…GSCP). Disordered stretches follow at residues 1-77 (MPLT…TARP), 137-181 (SMSR…SARS), 195-219 (RPKT…STRT), 235-281 (IMSE…RPPP), 327-370 (PSAG…RPIQ), and 396-420 (LPPP…QPWP). Residues 60–69 (KTPPGTPPLP) are compositionally biased toward pro residues. Residues 137–157 (SMSRRATQPPTTRSRVRPSTG) are compositionally biased toward polar residues. The segment covering 158 to 181 (SRPPVSPLVTSSSPSPFSTLSARS) has biased composition (low complexity). Polar residues predominate over residues 253–263 (GLRSASLSTAG). The segment covering 327 to 348 (PSAGSSPFTPTVSGCSASTSSA) has biased composition (low complexity).

Functionally, cell-to-cell movement. The sequence is that of Putative movement protein from Maize rayado fino virus (isolate Costa Rica/Guapiles) (MRFV).